A 115-amino-acid polypeptide reads, in one-letter code: uncharacterized protein (115 aa).

This is an uncharacterized protein from Aquifex aeolicus (strain VF5).